A 439-amino-acid polypeptide reads, in one-letter code: Tol-Pal system protein TolB (439 aa).

The signal sequence occupies residues 1–22 (MKKPLRWLAALTVLLLPLSALA).

This sequence belongs to the TolB family. As to quaternary structure, the Tol-Pal system is composed of five core proteins: the inner membrane proteins TolA, TolQ and TolR, the periplasmic protein TolB and the outer membrane protein Pal. They form a network linking the inner and outer membranes and the peptidoglycan layer.

Its subcellular location is the periplasm. In terms of biological role, part of the Tol-Pal system, which plays a role in outer membrane invagination during cell division and is important for maintaining outer membrane integrity. The polypeptide is Tol-Pal system protein TolB (Xanthomonas oryzae pv. oryzae (strain PXO99A)).